Here is a 165-residue protein sequence, read N- to C-terminus: Disulfide bond formation protein B (165 aa).

Residues M1–I10 lie on the Cytoplasmic side of the membrane. A helical membrane pass occupies residues Y11–Y27. Residues L28 to I45 are Periplasmic-facing. C37 and C40 are oxidised to a cystine. A helical transmembrane segment spans residues A46 to P62. At K63–T68 the chain is on the cytoplasmic side. The helical transmembrane segment at V69–T86 threads the bilayer. The Periplasmic segment spans residues R87–G143. Cysteines 102 and 129 form a disulfide. Residues W144–R162 traverse the membrane as a helical segment. Residues R163–R165 are Cytoplasmic-facing.

This sequence belongs to the DsbB family.

The protein localises to the cell inner membrane. Its function is as follows. Required for disulfide bond formation in some periplasmic proteins. Acts by oxidizing the DsbA protein. In Hahella chejuensis (strain KCTC 2396), this protein is Disulfide bond formation protein B.